The following is a 148-amino-acid chain: Lysozyme C (148 aa).

The N-terminal stretch at 1-18 is a signal peptide; the sequence is MKAVIILGLVLLSVTVQG. The C-type lysozyme domain occupies 19-148; sequence KIFERCELAR…VSQYVQGCGV (130 aa). Intrachain disulfides connect cysteine 24-cysteine 146, cysteine 48-cysteine 134, cysteine 83-cysteine 99, and cysteine 95-cysteine 113. Residues glutamate 53 and aspartate 71 contribute to the active site.

This sequence belongs to the glycosyl hydrolase 22 family. In terms of assembly, monomer.

It catalyses the reaction Hydrolysis of (1-&gt;4)-beta-linkages between N-acetylmuramic acid and N-acetyl-D-glucosamine residues in a peptidoglycan and between N-acetyl-D-glucosamine residues in chitodextrins.. Its function is as follows. Lysozymes have primarily a bacteriolytic function; those in tissues and body fluids are associated with the monocyte-macrophage system and enhance the activity of immunoagents. This chain is Lysozyme C (LYZ), found in Allenopithecus nigroviridis (Allen's swamp monkey).